Consider the following 290-residue polypeptide: Arylamine N-acetyltransferase, pineal gland isozyme NAT-3 (290 aa).

Residue Cys-68 is the Acyl-thioester intermediate of the active site. Active-site residues include His-107 and Asp-122.

This sequence belongs to the arylamine N-acetyltransferase family.

The enzyme catalyses an arylamine + acetyl-CoA = an N-acetylarylamine + CoA. It catalyses the reaction an N-hydroxyarylamine + acetyl-CoA = an N-acetoxyarylamine + CoA. Functionally, catalyzes the N- or O-acetylation of various arylamine and heterocyclic amine substrates, and participates in the detoxification of a plethora of hydrazine and arylamine drugs. This Gallus gallus (Chicken) protein is Arylamine N-acetyltransferase, pineal gland isozyme NAT-3.